The sequence spans 206 residues: Large ribosomal subunit protein uL22m (206 aa).

A mitochondrion-targeting transit peptide spans 1–40 (MAAAVLGQLGALWIHNLRSRGRLAWGVLPQSYVHTSASLD).

The protein belongs to the universal ribosomal protein uL22 family. As to quaternary structure, component of the mitochondrial ribosome large subunit (39S) which comprises a 16S rRNA and about 50 distinct proteins.

Its subcellular location is the mitochondrion. The sequence is that of Large ribosomal subunit protein uL22m (MRPL22) from Pongo abelii (Sumatran orangutan).